An 87-amino-acid polypeptide reads, in one-letter code: NAD(P)H-quinone oxidoreductase subunit O (87 aa).

Residues 1–10 are compositionally biased toward basic and acidic residues; sequence MSEQTGKVDD. The disordered stretch occupies residues 1–26; it reads MSEQTGKVDDSQSPPKVQKKLRKGDL.

It belongs to the complex I NdhO subunit family. As to quaternary structure, NDH-1 can be composed of about 15 different subunits; different subcomplexes with different compositions have been identified which probably have different functions.

Its subcellular location is the cellular thylakoid membrane. It catalyses the reaction a plastoquinone + NADH + (n+1) H(+)(in) = a plastoquinol + NAD(+) + n H(+)(out). It carries out the reaction a plastoquinone + NADPH + (n+1) H(+)(in) = a plastoquinol + NADP(+) + n H(+)(out). Its function is as follows. NDH-1 shuttles electrons from an unknown electron donor, via FMN and iron-sulfur (Fe-S) centers, to quinones in the respiratory and/or the photosynthetic chain. The immediate electron acceptor for the enzyme in this species is believed to be plastoquinone. Couples the redox reaction to proton translocation, and thus conserves the redox energy in a proton gradient. Cyanobacterial NDH-1 also plays a role in inorganic carbon-concentration. In Prochlorococcus marinus (strain NATL1A), this protein is NAD(P)H-quinone oxidoreductase subunit O.